A 281-amino-acid chain; its full sequence is UPF0294 protein VC_2238 (281 aa).

This sequence belongs to the UPF0294 family.

It localises to the cytoplasm. In Vibrio cholerae serotype O1 (strain ATCC 39315 / El Tor Inaba N16961), this protein is UPF0294 protein VC_2238.